We begin with the raw amino-acid sequence, 440 residues long: Protein EFFECTOR OF TRANSCRIPTION (440 aa).

Residues 131 to 167 (SIQGLGVAVNIHDADDISHGQTESIRTRLRSYGRPVP) form the GIY-YIG domain. The segment at 172–216 (LGDNASQTITQKKTGGRSKDKKHGFEEERDVSRVEAEENNTNSVH) is disordered. Positions 175 to 184 (NASQTITQKK) are enriched in polar residues. Basic and acidic residues predominate over residues 194-207 (HGFEEERDVSRVEA). Cx9Cx9RCx2HK repeat units follow at residues 247–272 (CGVL…TEHK) and 295–320 (CGVI…EDHK). Residues 339-363 (ILKEDKSKPKTRTSSTNQEEPGESL) are disordered. 2 Cx9Cx9RCx2HK repeats span residues 365-390 (CEAT…WQHK) and 409-434 (CGVK…QEHK).

Its subcellular location is the nucleus. In terms of biological role, transcription regulator that negatively modulates gibberellin-mediated developmental processes. May act as transcriptional repressor of giberellin controlled genes. Binds DNA without sequence preference. The chain is Protein EFFECTOR OF TRANSCRIPTION from Brassica napus (Rape).